The chain runs to 466 residues: ATP synthase subunit beta (466 aa).

148–155 (GGAGVGKT) is a binding site for ATP.

Belongs to the ATPase alpha/beta chains family. In terms of assembly, F-type ATPases have 2 components, CF(1) - the catalytic core - and CF(0) - the membrane proton channel. CF(1) has five subunits: alpha(3), beta(3), gamma(1), delta(1), epsilon(1). CF(0) has three main subunits: a(1), b(2) and c(9-12). The alpha and beta chains form an alternating ring which encloses part of the gamma chain. CF(1) is attached to CF(0) by a central stalk formed by the gamma and epsilon chains, while a peripheral stalk is formed by the delta and b chains.

Its subcellular location is the cell inner membrane. The catalysed reaction is ATP + H2O + 4 H(+)(in) = ADP + phosphate + 5 H(+)(out). In terms of biological role, produces ATP from ADP in the presence of a proton gradient across the membrane. The catalytic sites are hosted primarily by the beta subunits. The polypeptide is ATP synthase subunit beta (Herminiimonas arsenicoxydans).